The chain runs to 526 residues: Acetyl-CoA hydrolase (526 aa).

Thr-2 is subject to N-acetylthreonine. Gly-277 to Ile-281 lines the CoA pocket. Glu-302 serves as the catalytic 5-glutamyl coenzyme A thioester intermediate. Ser-350 carries the post-translational modification Phosphoserine. 2 residues coordinate CoA: Asn-392 and Gly-396.

It belongs to the acetyl-CoA hydrolase/transferase family. In terms of assembly, monomer. Post-translationally, glycosylated; contains mannose.

It localises to the cytoplasm. It catalyses the reaction acetyl-CoA + H2O = acetate + CoA + H(+). In terms of biological role, presumably involved in regulating the intracellular acetyl-CoA pool for fatty acid and cholesterol synthesis and fatty acid oxidation. It may be involved in overall regulation of acetylation during melatonin synthesis. The chain is Acetyl-CoA hydrolase (ACH1) from Saccharomyces cerevisiae (strain ATCC 204508 / S288c) (Baker's yeast).